Consider the following 173-residue polypeptide: Oleosin 18.5 kDa (173 aa).

The tract at residues 1–45 (MADTARGTHHDIIGRDQYPMMGRDRDQYQMSGRGSDYSKSRQIAK) is polar. The hydrophobic stretch occupies residues 46 to 117 (AATAVTAGGS…AAITVFSWIY (72 aa)). 3 helical membrane-spanning segments follow: residues 54 to 74 (GSLL…LTVA), 76 to 96 (PLLV…ALLI), and 97 to 117 (TGFL…SWIY). Residues 151–173 (YYGQQHTGGEHDRDRTRGGQHTT) are disordered. Positions 158-167 (GGEHDRDRTR) are enriched in basic and acidic residues.

Belongs to the oleosin family.

Its subcellular location is the lipid droplet. The protein localises to the membrane. In terms of biological role, may have a structural role to stabilize the lipid body during desiccation of the seed by preventing coalescence of the oil. Probably interacts with both lipid and phospholipid moieties of lipid bodies. May also provide recognition signals for specific lipase anchorage in lipolysis during seedling growth. This chain is Oleosin 18.5 kDa, found in Arabidopsis thaliana (Mouse-ear cress).